A 137-amino-acid polypeptide reads, in one-letter code: Actin-depolymerizing factor 7 (137 aa).

Ser6 carries the phosphoserine modification. Positions 7–137 (GMAVEDECKL…SFDIIKSRAL (131 aa)) constitute an ADF-H domain.

Belongs to the actin-binding proteins ADF family. In terms of tissue distribution, specifically expressed in pollen.

It localises to the cytoplasm. It is found in the cytoskeleton. Its function is as follows. Actin-depolymerizing protein. Severs actin filaments (F-actin) and binds to actin monomers. Binds monomeric actin (G-actin) with a marked preference for the ADP-loaded form and inhibits the rate of nucleotide exchange on G-actin. Required for pollen tube growth. Promotes turnover of longitudinal actin cables by severing actin filaments in pollen tubes. This chain is Actin-depolymerizing factor 7 (ADF7), found in Arabidopsis thaliana (Mouse-ear cress).